The sequence spans 380 residues: Glycerate kinase (380 aa).

The protein belongs to the glycerate kinase type-1 family.

It catalyses the reaction (R)-glycerate + ATP = (2R)-3-phosphoglycerate + ADP + H(+). This is Glycerate kinase (glxK) from Halalkalibacterium halodurans (strain ATCC BAA-125 / DSM 18197 / FERM 7344 / JCM 9153 / C-125) (Bacillus halodurans).